The sequence spans 458 residues: Argininosuccinate lyase (458 aa).

Belongs to the lyase 1 family. Argininosuccinate lyase subfamily.

It is found in the cytoplasm. The catalysed reaction is 2-(N(omega)-L-arginino)succinate = fumarate + L-arginine. Its pathway is amino-acid biosynthesis; L-arginine biosynthesis; L-arginine from L-ornithine and carbamoyl phosphate: step 3/3. This is Argininosuccinate lyase from Haemophilus ducreyi (strain 35000HP / ATCC 700724).